Reading from the N-terminus, the 472-residue chain is Coronin-6 (472 aa).

WD repeat units follow at residues 23-64 (QAYE…VLPL), 72-111 (KNYP…VWQI), 122-161 (EPII…IWNV), 165-204 (EVLL…IIDP), 210-251 (VAEQ…LWDP), and 256-296 (EPVA…YFEI). The disordered stretch occupies residues 407 to 433 (KRNILDVRPPSGPRRSQSASDAPLSQQ). Residues 420 to 433 (RRSQSASDAPLSQQ) show a composition bias toward polar residues. Positions 430–464 (LSQQHTLETLLEEIKALRERVQAQEQRITALENML) form a coiled coil.

In Homo sapiens (Human), this protein is Coronin-6 (CORO6).